A 434-amino-acid chain; its full sequence is uncharacterized protein (434 aa).

One can recognise a TRAM domain in the interval L4–K62. [4Fe-4S] cluster contacts are provided by C75, C81, C84, and C161. Residues Q266, Y295, E316, and N364 each coordinate S-adenosyl-L-methionine. C391 acts as the Nucleophile in catalysis.

It belongs to the class I-like SAM-binding methyltransferase superfamily. RNA M5U methyltransferase family.

This is an uncharacterized protein from Protochlamydia amoebophila (strain UWE25).